Consider the following 309-residue polypeptide: Uricase-2 isozyme 2 (309 aa).

Catalysis depends on charge relay system residues Lys18 and Thr64. Urate contacts are provided by Thr64, Asp65, Phe166, Arg183, Val238, Gln239, and Asn265. Residue His267 is the Charge relay system of the active site.

It belongs to the uricase family. Homotetramer.

The protein localises to the peroxisome. The enzyme catalyses urate + O2 + H2O = 5-hydroxyisourate + H2O2. It functions in the pathway purine metabolism; urate degradation; (S)-allantoin from urate: step 1/3. Its function is as follows. Catalyzes the oxidation of uric acid to 5-hydroxyisourate, which is further processed to form (S)-allantoin. The protein is Uricase-2 isozyme 2 of Glycine max (Soybean).